We begin with the raw amino-acid sequence, 381 residues long: MQTSIILGTGRFQAIRRLSARVRRLWYSAPETLRGGPLLSAIKLTSMTYRAGFEMDRRRSRFRRRRLPAYVVSVGNLAVGGTGKTPLTLWLARYFKNGGRRVAVLSRGYGRSGSAPGRVPSSGELSVLALEYGDEPAMLALELGDTPVYVGKHRWESGILAIESSRADLVILDDGFQHHALERDLDLVLLDASNPFGNGFTLPLGPLREPKAHLARAHAIVLTRAVEPESVARTRAQLDKAFPDKPVFAAQHILRGFHAGLGGAVVPLRSMVARPAVAFAGIADPKSFFSLLEALEIDLRMAFAFPDHHRPTARDTAALFDAVRACSADLLITTQKDAVRLPGFLRRVVCVPDLEIDFGEDETRFRRFLDRETRGRQAMPE.

Residue 78–85 (AVGGTGKT) coordinates ATP.

Belongs to the LpxK family.

It carries out the reaction a lipid A disaccharide + ATP = a lipid IVA + ADP + H(+). It functions in the pathway glycolipid biosynthesis; lipid IV(A) biosynthesis; lipid IV(A) from (3R)-3-hydroxytetradecanoyl-[acyl-carrier-protein] and UDP-N-acetyl-alpha-D-glucosamine: step 6/6. In terms of biological role, transfers the gamma-phosphate of ATP to the 4'-position of a tetraacyldisaccharide 1-phosphate intermediate (termed DS-1-P) to form tetraacyldisaccharide 1,4'-bis-phosphate (lipid IVA). This is Tetraacyldisaccharide 4'-kinase from Syntrophobacter fumaroxidans (strain DSM 10017 / MPOB).